The sequence spans 368 residues: ATP-dependent (S)-NAD(P)H-hydrate dehydratase (368 aa).

The 345-residue stretch at L13–L357 folds into the YjeF C-terminal domain. (6S)-NADPHX is bound by residues G125 and N178–R184. ATP is bound by residues K231–D235 and G250–G259. Residue D260 participates in (6S)-NADPHX binding.

The protein belongs to the NnrD/CARKD family. Mg(2+) is required as a cofactor.

The protein resides in the cytoplasm. The catalysed reaction is (6S)-NADHX + ATP = ADP + phosphate + NADH + H(+). It catalyses the reaction (6S)-NADPHX + ATP = ADP + phosphate + NADPH + H(+). In terms of biological role, catalyzes the dehydration of the S-form of NAD(P)HX at the expense of ATP, which is converted to ADP. Together with NAD(P)HX epimerase, which catalyzes the epimerization of the S- and R-forms, the enzyme allows the repair of both epimers of NAD(P)HX, a damaged form of NAD(P)H that is a result of enzymatic or heat-dependent hydration. This chain is ATP-dependent (S)-NAD(P)H-hydrate dehydratase, found in Aspergillus fumigatus (strain ATCC MYA-4609 / CBS 101355 / FGSC A1100 / Af293) (Neosartorya fumigata).